The chain runs to 490 residues: uncharacterized protein (490 aa).

The N-terminal stretch at 1 to 19 (MSITSVSLYVYLICAGGHA) is a signal peptide.

Belongs to the mimivirus L137 family.

This is an uncharacterized protein from Acanthamoeba polyphaga (Amoeba).